The sequence spans 189 residues: Peptidyl-tRNA hydrolase (189 aa).

Y15 serves as a coordination point for tRNA. The active-site Proton acceptor is the H20. Residues Y65, N67, and N113 each coordinate tRNA.

The protein belongs to the PTH family. As to quaternary structure, monomer.

The protein resides in the cytoplasm. It catalyses the reaction an N-acyl-L-alpha-aminoacyl-tRNA + H2O = an N-acyl-L-amino acid + a tRNA + H(+). Functionally, hydrolyzes ribosome-free peptidyl-tRNAs (with 1 or more amino acids incorporated), which drop off the ribosome during protein synthesis, or as a result of ribosome stalling. Catalyzes the release of premature peptidyl moieties from peptidyl-tRNA molecules trapped in stalled 50S ribosomal subunits, and thus maintains levels of free tRNAs and 50S ribosomes. The protein is Peptidyl-tRNA hydrolase of Caldicellulosiruptor bescii (strain ATCC BAA-1888 / DSM 6725 / KCTC 15123 / Z-1320) (Anaerocellum thermophilum).